The sequence spans 223 residues: MIF4G domain-containing protein A (223 aa).

Residues 7-206 (QEDYKMQAFD…LEMIEYRAAG (200 aa)) enclose the MIF4G domain.

This sequence belongs to the MIF4GD family. In terms of assembly, interacts with eif4g1, eif4g2 and slbp; probably tethered by SLBP to the 3'-end of mRNAs ending with the histone stem-loop, it also interacts with eif4g1 which is bound to their 5'-end.

The protein resides in the cytoplasm. It localises to the nucleus. Functions in replication-dependent translation of histone mRNAs which differ from other eukaryotic mRNAs in that they do not end with a poly-A tail but a stem-loop. May participate in circularizing those mRNAs specifically enhancing their translation. The chain is MIF4G domain-containing protein A (mif4gd-a) from Xenopus laevis (African clawed frog).